A 629-amino-acid polypeptide reads, in one-letter code: uncharacterized protein (629 aa).

An ABC transporter 1 domain is found at 4–255 (LKAENLYKTY…KRAEREAQAE (252 aa)). 36–43 (GPNGTGKS) contributes to the ATP binding site. Residues 284–304 (KARIDRVETLKEQTGPQSSGS) are disordered. Basic and acidic residues predominate over residues 285–294 (ARIDRVETLK). Over residues 295–304 (EQTGPQSSGS) the composition is skewed to polar residues. An ABC transporter 2 domain is found at 319–537 (IEAENVMIAY…EESKAKKAAP (219 aa)). An ATP-binding site is contributed by 351–358 (GPNGIGKT). The interval 530–555 (SKAKKAAPKPAAEEKTAEAEPKKKRK) is disordered. The segment covering 540-550 (AAEEKTAEAEP) has biased composition (basic and acidic residues). Residues 560-629 (KDQLEWDGIE…LSLMIEELES (70 aa)) adopt a coiled-coil conformation.

This sequence belongs to the ABC transporter superfamily.

This is an uncharacterized protein from Bacillus subtilis (strain 168).